Reading from the N-terminus, the 420-residue chain is Serine hydroxymethyltransferase (420 aa).

(6S)-5,6,7,8-tetrahydrofolate contacts are provided by residues L121 and 125–127 (GHL). K230 bears the N6-(pyridoxal phosphate)lysine mark. 354-356 (SPF) lines the (6S)-5,6,7,8-tetrahydrofolate pocket.

This sequence belongs to the SHMT family. In terms of assembly, homodimer. The cofactor is pyridoxal 5'-phosphate.

It is found in the cytoplasm. The catalysed reaction is (6R)-5,10-methylene-5,6,7,8-tetrahydrofolate + glycine + H2O = (6S)-5,6,7,8-tetrahydrofolate + L-serine. Its pathway is one-carbon metabolism; tetrahydrofolate interconversion. It functions in the pathway amino-acid biosynthesis; glycine biosynthesis; glycine from L-serine: step 1/1. In terms of biological role, catalyzes the reversible interconversion of serine and glycine with tetrahydrofolate (THF) serving as the one-carbon carrier. This reaction serves as the major source of one-carbon groups required for the biosynthesis of purines, thymidylate, methionine, and other important biomolecules. Also exhibits THF-independent aldolase activity toward beta-hydroxyamino acids, producing glycine and aldehydes, via a retro-aldol mechanism. The chain is Serine hydroxymethyltransferase from Rickettsia africae (strain ESF-5).